A 144-amino-acid polypeptide reads, in one-letter code: Large ribosomal subunit protein uL16 (144 aa).

The protein belongs to the universal ribosomal protein uL16 family. In terms of assembly, part of the 50S ribosomal subunit.

Functionally, binds 23S rRNA and is also seen to make contacts with the A and possibly P site tRNAs. This is Large ribosomal subunit protein uL16 from Bacillus mycoides (strain KBAB4) (Bacillus weihenstephanensis).